The following is a 22-amino-acid chain: Unknown protein 10 (22 aa).

This chain is Unknown protein 10, found in Pseudotsuga menziesii (Douglas-fir).